A 252-amino-acid polypeptide reads, in one-letter code: 5'-nucleotidase SurE (252 aa).

Residues Asp8, Asp9, Ser39, and Asn91 each coordinate a divalent metal cation.

The protein belongs to the SurE nucleotidase family. The cofactor is a divalent metal cation.

Its subcellular location is the cytoplasm. It catalyses the reaction a ribonucleoside 5'-phosphate + H2O = a ribonucleoside + phosphate. Its function is as follows. Nucleotidase that shows phosphatase activity on nucleoside 5'-monophosphates. This is 5'-nucleotidase SurE from Paraburkholderia xenovorans (strain LB400).